The chain runs to 437 residues: Vacuolar cation/proton exchanger 2 (437 aa).

A disordered region spans residues 1-29 (MMGAEKAEGMEELELEEGGGSPSPSPMTA). The Cytoplasmic portion of the chain corresponds to 1-65 (MMGAEKAEGM…KWRRALTSVR (65 aa)). Residues 66–86 (VVILQAKINVLLPFGPLAVML) traverse the membrane as a helical segment. The Extracellular portion of the chain corresponds to 87–88 (HY). A helical transmembrane segment spans residues 89-109 (LSANHQGWVFLFSLIGITPLA). Residues 110 to 126 (ERLGYATEQLALYTGPT) lie on the Cytoplasmic side of the membrane. A helical membrane pass occupies residues 127–147 (IGGLLNATFGNATEMIISLYA). Positions 136 to 171 (GNATEMIISLYALKNGMIRVVQQSLLGSILSNMLLV) are cation selection. At 148–161 (LKNGMIRVVQQSLL) the chain is on the extracellular side. Residues 162 to 182 (GSILSNMLLVLGCAFFAGGLV) traverse the membrane as a helical segment. The Cytoplasmic portion of the chain corresponds to 183–194 (HPSRDQVFNKAS). The chain crosses the membrane as a helical span at residues 195-215 (AVVNSGLLLMAVLGLMFPAVL). Residues 216–228 (HFTHSEVQYGKSE) lie on the Extracellular side of the membrane. The chain crosses the membrane as a helical span at residues 229 to 249 (VSLSRFSSCIMLVAYASYLFF). Over 250-281 (QLKSQRSLYSPIGEQEEEVTEDEEEEKEITQG) the chain is Cytoplasmic. The helical transmembrane segment at 282–302 (EAICWLFVLTIWISILSGYLV) threads the bilayer. Over 303 to 310 (DAIQGASE) the chain is Extracellular. The chain crosses the membrane as a helical span at residues 311 to 331 (SLNMPVAFISVILLPIVGNAA). Residues 328–363 (GNAAEHASAIMFAMKDKLDITLGVAIGSSTQISMFV) are cation selection. The Cytoplasmic portion of the chain corresponds to 332 to 352 (EHASAIMFAMKDKLDITLGVA). The helical transmembrane segment at 353–373 (IGSSTQISMFVIPFCVVIGWI) threads the bilayer. Topologically, residues 374 to 379 (MGQQMD) are extracellular. The helical transmembrane segment at 380–400 (LNFQLFETATLFITVLVVAFM) threads the bilayer. Over 401–408 (LQEGTSNY) the chain is Cytoplasmic. A helical membrane pass occupies residues 409–429 (FKGLMLILCYLIVAASFFVHV). Over 430 to 437 (DPDSSNNK) the chain is Extracellular.

It belongs to the Ca(2+):cation antiporter (CaCA) (TC 2.A.19) family. Cation/proton exchanger (CAX) subfamily. As to expression, expressed in roots and shoots.

Its subcellular location is the vacuole membrane. Functionally, vacuolar cation/proton exchanger (CAX). Translocates Ca(2+) and other metal ions into vacuoles using the proton gradient formed by H(+)-ATPase and H(+)-pyrophosphatase. The protein is Vacuolar cation/proton exchanger 2 (CAX2) of Oryza sativa subsp. japonica (Rice).